The chain runs to 348 residues: Cuticle collagen rol-6 (348 aa).

The tract at residues 76–348 (GYGATGVQPP…SARRHRKFQL (273 aa)) is disordered. The segment covering 120–137 (PGGGFPDGPFPNGGGPRG) has biased composition (gly residues). Triple-helical region stretches follow at residues 152–178 (GPAG…DGKD), 196–258 (GPLG…DGER), 261–284 (GRPG…TGRD), and 288–323 (GQSG…PGKD). Residues 194 to 231 (PQGPLGPQGPNGAPGLRGMRGARGQPGRPGRDGNPGMP) are compositionally biased toward low complexity. The span at 297–306 (GLQGYGGAAG) shows a compositional bias: gly residues. The span at 322–338 (KDAEYCKCPGREGDAGR) shows a compositional bias: basic and acidic residues. The span at 339 to 348 (SARRHRKFQL) shows a compositional bias: basic residues.

The protein belongs to the cuticular collagen family. As to quaternary structure, collagen polypeptide chains are complexed within the cuticle by disulfide bonds and other types of covalent cross-links. In terms of tissue distribution, localizes in stripes along the alae.

Nematode cuticles are composed largely of collagen-like proteins. The cuticle functions both as an exoskeleton and as a barrier to protect the worm from its environment. May play a role in cuticle remodeling in response to the environment. Involved in body morphogenesis. This chain is Cuticle collagen rol-6 (rol-6), found in Caenorhabditis elegans.